We begin with the raw amino-acid sequence, 164 residues long: Large ribosomal subunit protein uL10 (164 aa).

The protein belongs to the universal ribosomal protein uL10 family. Part of the ribosomal stalk of the 50S ribosomal subunit. The N-terminus interacts with L11 and the large rRNA to form the base of the stalk. The C-terminus forms an elongated spine to which L12 dimers bind in a sequential fashion forming a multimeric L10(L12)X complex.

Functionally, forms part of the ribosomal stalk, playing a central role in the interaction of the ribosome with GTP-bound translation factors. The protein is Large ribosomal subunit protein uL10 of Aliivibrio fischeri (strain MJ11) (Vibrio fischeri).